Consider the following 338-residue polypeptide: Biotin synthase (338 aa).

The Radical SAM core domain occupies 59–284 (EEVEIEGIVS…RTTLRFAGGR (226 aa)). Cysteine 74, cysteine 78, and cysteine 81 together coordinate [4Fe-4S] cluster. Cysteine 117, cysteine 209, and arginine 279 together coordinate [2Fe-2S] cluster.

It belongs to the radical SAM superfamily. Biotin synthase family. As to quaternary structure, homodimer. The cofactor is [4Fe-4S] cluster. [2Fe-2S] cluster is required as a cofactor.

The catalysed reaction is (4R,5S)-dethiobiotin + (sulfur carrier)-SH + 2 reduced [2Fe-2S]-[ferredoxin] + 2 S-adenosyl-L-methionine = (sulfur carrier)-H + biotin + 2 5'-deoxyadenosine + 2 L-methionine + 2 oxidized [2Fe-2S]-[ferredoxin]. The protein operates within cofactor biosynthesis; biotin biosynthesis; biotin from 7,8-diaminononanoate: step 2/2. Its function is as follows. Catalyzes the conversion of dethiobiotin (DTB) to biotin by the insertion of a sulfur atom into dethiobiotin via a radical-based mechanism. The chain is Biotin synthase from Corynebacterium urealyticum (strain ATCC 43042 / DSM 7109).